Here is a 429-residue protein sequence, read N- to C-terminus: E3 ubiquitin-protein ligase ZNRF4 (429 aa).

The first 27 residues, 1–27 (MPLCRPEHLMPRASRVPVAASLPLSHA), serve as a signal peptide directing secretion. Residues 28–250 (VIPTQLPSRP…PPCHDLGCHP (223 aa)) are Lumenal-facing. A disordered region spans residues 30 to 67 (PTQLPSRPGHRPPGRPRRCPKASCLPPPVGPSSTQTAK). Basic residues predominate over residues 37-49 (PGHRPPGRPRRCP). Residues N107, N152, and N229 are each glycosylated (N-linked (GlcNAc...) asparagine). In terms of domain architecture, PA spans 151–223 (GNRSLGAIVL…VSEAASQDLR (73 aa)). Residues 251 to 271 (VLTVSWVLGCTLALVVSAFFV) traverse the membrane as a helical segment. Topologically, residues 272-429 (LNHLWLWAQA…SSAPPEAPGQ (158 aa)) are cytoplasmic. The segment at 309-352 (CAICLDEYEEGDQLKILPCSHTYHCKCIDPWFSQAPRRSCPVCK) adopts an RING-type; atypical zinc-finger fold.

In terms of assembly, interacts with CANX.

The protein resides in the endoplasmic reticulum membrane. It carries out the reaction S-ubiquitinyl-[E2 ubiquitin-conjugating enzyme]-L-cysteine + [acceptor protein]-L-lysine = [E2 ubiquitin-conjugating enzyme]-L-cysteine + N(6)-ubiquitinyl-[acceptor protein]-L-lysine.. The protein operates within protein modification; protein ubiquitination. Its function is as follows. E3 ubiquitin-protein ligase that acts as a negative regulator of NOD2 signaling by mediating ubiquitination and degradation of RIPK2. Also catalyzes ubiquitination and proteasomal degradation of CANX within the endoplasmic reticulum. Could have a role in spermatogenesis. This chain is E3 ubiquitin-protein ligase ZNRF4, found in Homo sapiens (Human).